The following is a 541-amino-acid chain: Chaperonin GroEL (541 aa).

Residues Thr-30–Pro-33, Lys-51, Asp-87–Thr-91, Gly-415, Asn-479–Ala-481, and Asp-495 contribute to the ATP site.

Belongs to the chaperonin (HSP60) family. In terms of assembly, forms a cylinder of 14 subunits composed of two heptameric rings stacked back-to-back. Interacts with the co-chaperonin GroES.

The protein resides in the cytoplasm. It catalyses the reaction ATP + H2O + a folded polypeptide = ADP + phosphate + an unfolded polypeptide.. Its function is as follows. Together with its co-chaperonin GroES, plays an essential role in assisting protein folding. The GroEL-GroES system forms a nano-cage that allows encapsulation of the non-native substrate proteins and provides a physical environment optimized to promote and accelerate protein folding. The sequence is that of Chaperonin GroEL from Acinetobacter baumannii (strain SDF).